A 96-amino-acid polypeptide reads, in one-letter code: UPF0235 protein YggU (96 aa).

It belongs to the UPF0235 family.

This Salmonella typhimurium (strain LT2 / SGSC1412 / ATCC 700720) protein is UPF0235 protein YggU.